The primary structure comprises 367 residues: MEDVLAEKLSRVCKFDLPFIPCSIPFECHPDFTRISKDTDAWALRMLSITDPYERKKALQGRHSLYSPMIIPRGESSKAELSSKHTWTMFVLDDIAENFSEQEGKKAIDILLEVAEGSYVLSEKEKEKHPSHAMFEEVMSSFRSLMDPPLFARYMNCLRNYLDSVVEEASLRIAKSIPSLEKYRLLRRETSFMEADGGIMCEFCMDLKLHKSVVESPDFVAFVKAVIDHVVLVNDLLSFRHELKIKCFHNYLCVIFCHSPDNTSFQETVDKVCEMIQEAEAEILQLQQKLIKLGEETGDKDLVEYATWYPCVASGNLRWSYVTGRYHGLDNPLLNGEPFQGTWFLHPEATLILPLGSKCGNHPFITI.

Mg(2+)-binding residues include Asp93, Asn234, and Ser238. A DDXXE motif motif is present at residues 93–97; the sequence is DDIAE.

The protein belongs to the terpene synthase family. Mg(2+) is required as a cofactor. The cofactor is Mn(2+).

The enzyme catalyses (2E,6E)-farnesyl diphosphate = (E)-2-epi-beta-caryophyllene + diphosphate. It participates in secondary metabolite biosynthesis; terpenoid biosynthesis. Functionally, sesquiterpene synthase converting farnesyl diphosphate to (E)-2-epi-beta-caryophyllene as the major product, and to two other unidentified sesquiterpenes. Has no diterpene synthase activity. This is (E)-2-epi-beta-caryophyllene synthase from Selaginella moellendorffii (Spikemoss).